The chain runs to 564 residues: Efflux pump DEP3 (564 aa).

Polar residues predominate over residues 1 to 12 (MVYSSTSSSQNR). A disordered region spans residues 1–48 (MVYSSTSSSQNRPDGEKHVEAVGSSTRIPSDELVDRGGGDTTTGKQSP). A compositionally biased stretch (basic and acidic residues) spans 29 to 38 (PSDELVDRGG). The next 14 membrane-spanning stretches (helical) occupy residues 65–85 (STTL…PAII), 91–111 (LELL…ILLW), 122–142 (WVYI…GAAP), 152–172 (VIAG…VSVL), 185–205 (STVV…AFAA), 212–232 (WGFY…FLLF), 255–275 (AVIF…GGVV), 281–301 (GTVI…IVLL), 332–352 (FLSS…FQFI), 362–382 (VRLL…GFLM), 386–406 (GLIP…TALM), 423–443 (ILIG…VQSL), 452–472 (AVGA…AISG), and 528–548 (TIWA…FPLL).

It belongs to the major facilitator superfamily. TCR/Tet family.

It is found in the cell membrane. In terms of biological role, efflux pump; part of the gene cluster that mediates the biosynthesis of depudecin, a highly oxidized eleven-carbon linear polyketide that acts as a histone deacetylase (HDAC) inhibitor and makes a small contribution to pathogenesis. Is presumed either to be responsible for exporting depudecin, to provide self-protection, or both. The polypeptide is Efflux pump DEP3 (Alternaria brassicicola (Dark leaf spot agent)).